We begin with the raw amino-acid sequence, 81 residues long: U-megalopygitoxin(3)-Mo4 (81 aa).

The N-terminal stretch at 1–20 (MNSKFVLIVVFLAVVSICFA) is a signal peptide.

The protein belongs to the caterpillar 3 family. In terms of processing, contains 3 disulfide bonds. As to expression, expressed by the venom apparatus.

The protein resides in the secreted. Probable toxin. The polypeptide is U-megalopygitoxin(3)-Mo4 (Megalopyge opercularis (Southern flannel moth)).